We begin with the raw amino-acid sequence, 279 residues long: Energy-coupling factor transporter ATP-binding protein EcfA1 (279 aa).

The ABC transporter domain maps to Ile-5–Asp-240. An ATP-binding site is contributed by Gly-40 to Ser-47.

Belongs to the ABC transporter superfamily. Energy-coupling factor EcfA family. In terms of assembly, forms a stable energy-coupling factor (ECF) transporter complex composed of 2 membrane-embedded substrate-binding proteins (S component), 2 ATP-binding proteins (A component) and 2 transmembrane proteins (T component).

The protein resides in the cell membrane. ATP-binding (A) component of a common energy-coupling factor (ECF) ABC-transporter complex. Unlike classic ABC transporters this ECF transporter provides the energy necessary to transport a number of different substrates. The polypeptide is Energy-coupling factor transporter ATP-binding protein EcfA1 (Streptococcus pyogenes serotype M28 (strain MGAS6180)).